The sequence spans 227 residues: uncharacterized protein (227 aa).

Transmembrane regions (helical) follow at residues 12-32 and 80-100; these read IVLF…YLYA and IILI…KIPL.

It is found in the cell membrane. This is an uncharacterized protein from Methanocaldococcus jannaschii (strain ATCC 43067 / DSM 2661 / JAL-1 / JCM 10045 / NBRC 100440) (Methanococcus jannaschii).